A 611-amino-acid polypeptide reads, in one-letter code: Dihydroxy-acid dehydratase (611 aa).

Asp-81 is a binding site for Mg(2+). Cys-122 contributes to the [2Fe-2S] cluster binding site. Asp-123 and Lys-124 together coordinate Mg(2+). Lys-124 carries the post-translational modification N6-carboxylysine. Cys-195 contributes to the [2Fe-2S] cluster binding site. Glu-491 contributes to the Mg(2+) binding site. Residue Ser-517 is the Proton acceptor of the active site.

This sequence belongs to the IlvD/Edd family. Homodimer. [2Fe-2S] cluster serves as cofactor. It depends on Mg(2+) as a cofactor.

It catalyses the reaction (2R)-2,3-dihydroxy-3-methylbutanoate = 3-methyl-2-oxobutanoate + H2O. It carries out the reaction (2R,3R)-2,3-dihydroxy-3-methylpentanoate = (S)-3-methyl-2-oxopentanoate + H2O. It functions in the pathway amino-acid biosynthesis; L-isoleucine biosynthesis; L-isoleucine from 2-oxobutanoate: step 3/4. It participates in amino-acid biosynthesis; L-valine biosynthesis; L-valine from pyruvate: step 3/4. Functions in the biosynthesis of branched-chain amino acids. Catalyzes the dehydration of (2R,3R)-2,3-dihydroxy-3-methylpentanoate (2,3-dihydroxy-3-methylvalerate) into 2-oxo-3-methylpentanoate (2-oxo-3-methylvalerate) and of (2R)-2,3-dihydroxy-3-methylbutanoate (2,3-dihydroxyisovalerate) into 2-oxo-3-methylbutanoate (2-oxoisovalerate), the penultimate precursor to L-isoleucine and L-valine, respectively. This is Dihydroxy-acid dehydratase from Actinobacillus pleuropneumoniae serotype 3 (strain JL03).